The sequence spans 462 residues: Trigger factor (462 aa).

Residues 163 to 248 (GDEVLFDFKG…LKEVRRVNSL (86 aa)) enclose the PPIase FKBP-type domain. Positions 442–462 (SMQEKQTQEPAEEKVETKEEK) are disordered. The segment covering 452-462 (AEEKVETKEEK) has biased composition (basic and acidic residues).

The protein belongs to the FKBP-type PPIase family. Tig subfamily.

The protein localises to the cytoplasm. The catalysed reaction is [protein]-peptidylproline (omega=180) = [protein]-peptidylproline (omega=0). Its function is as follows. Involved in protein export. Acts as a chaperone by maintaining the newly synthesized protein in an open conformation. Functions as a peptidyl-prolyl cis-trans isomerase. This Mycoplasmopsis synoviae (strain 53) (Mycoplasma synoviae) protein is Trigger factor.